The chain runs to 425 residues: Formyl-CoA:oxalate CoA-transferase (425 aa).

CoA contacts are provided by residues 17-18 (QS), arginine 38, 72-75 (LDTK), 96-98 (NFG), arginine 104, and 136-139 (KVYE). Residue aspartate 168 is the Nucleophile of the active site. 247 to 249 (GGQ) is a substrate binding site.

It belongs to the CoA-transferase III family. Frc subfamily. In terms of assembly, homodimer.

It carries out the reaction formyl-CoA + oxalate = oxalyl-CoA + formate. It functions in the pathway metabolic intermediate degradation; oxalate degradation; CO(2) and formate from oxalate: step 1/2. Its function is as follows. Involved in the catabolism of oxalate and in the adapatation to low pH via the induction of the oxalate-dependent acid tolerance response (ATR). Catalyzes the transfer of the CoA moiety from formyl-CoA to oxalate. The protein is Formyl-CoA:oxalate CoA-transferase of Rhodopseudomonas palustris (strain HaA2).